Consider the following 153-residue polypeptide: Prefoldin subunit alpha (153 aa).

Belongs to the prefoldin subunit alpha family. As to quaternary structure, heterohexamer of two alpha and four beta subunits.

Its subcellular location is the cytoplasm. Molecular chaperone capable of stabilizing a range of proteins. Seems to fulfill an ATP-independent, HSP70-like function in archaeal de novo protein folding. This chain is Prefoldin subunit alpha, found in Methanothrix thermoacetophila (strain DSM 6194 / JCM 14653 / NBRC 101360 / PT) (Methanosaeta thermophila).